The sequence spans 331 residues: L-lactate dehydrogenase A chain (331 aa).

NAD(+) is bound by residues 29–57 and arginine 98; that span reads GMVG…MEDK. Substrate contacts are provided by arginine 105, asparagine 137, and arginine 168. Asparagine 137 contributes to the NAD(+) binding site. Residue histidine 192 is the Proton acceptor of the active site. Threonine 247 is a substrate binding site.

This sequence belongs to the LDH/MDH superfamily. LDH family. Homotetramer.

The protein resides in the cytoplasm. It catalyses the reaction (S)-lactate + NAD(+) = pyruvate + NADH + H(+). It functions in the pathway fermentation; pyruvate fermentation to lactate; (S)-lactate from pyruvate: step 1/1. Interconverts simultaneously and stereospecifically pyruvate and lactate with concomitant interconversion of NADH and NAD(+). The polypeptide is L-lactate dehydrogenase A chain (ldha) (Dissostichus eleginoides (Patagonian toothfish)).